A 61-amino-acid chain; its full sequence is Small ribosomal subunit protein bS21 (61 aa).

Belongs to the bacterial ribosomal protein bS21 family.

This is Small ribosomal subunit protein bS21 from Leuconostoc mesenteroides subsp. mesenteroides (strain ATCC 8293 / DSM 20343 / BCRC 11652 / CCM 1803 / JCM 6124 / NCDO 523 / NBRC 100496 / NCIMB 8023 / NCTC 12954 / NRRL B-1118 / 37Y).